Consider the following 563-residue polypeptide: Arginine--tRNA ligase (563 aa).

A 'HIGH' region motif is present at residues 120-130; the sequence is PNIAKPFHIGH.

This sequence belongs to the class-I aminoacyl-tRNA synthetase family. As to quaternary structure, monomer.

The protein resides in the cytoplasm. The catalysed reaction is tRNA(Arg) + L-arginine + ATP = L-arginyl-tRNA(Arg) + AMP + diphosphate. The protein is Arginine--tRNA ligase of Clostridium botulinum (strain ATCC 19397 / Type A).